Consider the following 239-residue polypeptide: Small ribosomal subunit protein uS2c (239 aa).

This sequence belongs to the universal ribosomal protein uS2 family.

It is found in the plastid. The protein resides in the organellar chromatophore. In Paulinella chromatophora, this protein is Small ribosomal subunit protein uS2c (rps2).